The primary structure comprises 237 residues: DNA repair protein RecO (237 aa).

Belongs to the RecO family.

Involved in DNA repair and RecF pathway recombination. The sequence is that of DNA repair protein RecO from Flavobacterium johnsoniae (strain ATCC 17061 / DSM 2064 / JCM 8514 / BCRC 14874 / CCUG 350202 / NBRC 14942 / NCIMB 11054 / UW101) (Cytophaga johnsonae).